Reading from the N-terminus, the 350-residue chain is Sodium/calcium exchanger MaX1 (350 aa).

The next 10 membrane-spanning stretches (helical) occupy residues 4–24, 39–59, 69–89, 101–121, 125–145, 202–222, 242–264, 276–296, 302–322, and 330–350; these read VNFL…DYFV, FVIG…ASSI, IVIG…VGVA, MLKR…VFAF, LSML…FFLF, GGFA…VIGA, VIGT…VSAA, VIGS…LFYP, MSLF…LIFI, and RWEG…LFYI.

This sequence belongs to the Ca(2+):cation antiporter (CaCA) (TC 2.A.19) family.

It localises to the cell membrane. Its activity is regulated as follows. Calcium transport is inhibited by Na(+), K(+), Li(+), Mg(2+) or Mn(2+). Catalyzes Na(+)/Ca(2+) exchange. The transport is electrogenic with a likely stoichiometry of 3 or more Na(+) for each Ca(2+). Is K(+)-independent. In Methanosarcina acetivorans (strain ATCC 35395 / DSM 2834 / JCM 12185 / C2A), this protein is Sodium/calcium exchanger MaX1 (maX1).